The following is a 257-amino-acid chain: Transcription factor bHLH55 (257 aa).

The bHLH domain maps to 74-126 (NKRAKHKELERQRRQENTSLFKILRYLLPSQYIKGKRSSADHVLEAVNYIKDL).

As to quaternary structure, homodimer. Expressed in roots, leaves, stems, and flowers.

Its subcellular location is the nucleus. The chain is Transcription factor bHLH55 (BHLH55) from Arabidopsis thaliana (Mouse-ear cress).